The primary structure comprises 768 residues: MAAGMLTDREREAIVSNLTKDVQALREMVRSRESELVKLHREIHKLKSVLQQTTNNLNVTRNEKAKKKLYSLPEQCGEQESRNQNPHLCSSCGMVLPTSPEFALEALSLGPLSPLASTSSASPSGRTSADEVRPKAMPAAIKKQGVSAESCVQSMQQSYSIPIPKYEKDFSDKQQIKDAIMDNDFLKNIDASQVRELVDSMYSKSIAAGEFVIREGEVGAHLYVSAAGEFAVMQQGKVLDKMGAGKAFGELAILYNCTRTASIRVLSEAARVWVLDRRVFQQIMMCTGLQRIENSVNFLRSVPLLMNLSEELLAKIADVLELEFYAAGTYIIRQGTAGDSFFLISQGNVRVTQKLTPTSPEETELRTLSRGDYFGEQALINEDKRTANIIALSPGVECLTLDRDSFKRLIGDLCELKEKDYGDESRKLAMKQAQESCRDEPKEQLQQEFPDLKLTDLEVVSTLGIGGFGRVELVKAHHQDRVDIFALKCLKKRHIVDTKQEEHIFSERHIMLSSRSPFICRLYRTFRDEKYVYMLLEACMGGEIWTMLRDRGSFEDNAAQFIIGCVLQAFEYLHARGIIYRDLKPENLMLDERGYVKIVDFGFAKQIGTSSKTWTFCGTPEYVAPEIILNKGHDRAVDYWALGILIHELLNGTPPFSAPDPMQTYNLILKGIDMIAFPKHISRWAVQLIKRLCRDVPSERLGYQTGGIQDIKKHKWFLGFDWDGLASQLLIPPFVRPIAHPTDVRYFDRFPCDLNEPPDELSGWDADF.

The segment at M1–S192 is regulatory. Residues P114–T127 are compositionally biased toward low complexity. Residues P114 to P134 are disordered. 3',5'-cyclic GMP is bound by residues G249–A252, R259–T260, R366, G375–A378, R385–T386, and Y421. Positions L457–F717 constitute a Protein kinase domain. ATP-binding positions include L463–V471 and K488. Catalysis depends on D582, which acts as the Proton acceptor. The AGC-kinase C-terminal domain maps to L718–F768.

The protein belongs to the protein kinase superfamily. AGC Ser/Thr protein kinase family. cGMP subfamily. In terms of assembly, homodimer. Requires Mg(2+) as cofactor. Post-translationally, autophosphorylated. In embryo stage 13, expression is seen in a few large, irregular cells having the appearance of hemocytes or macrophages. In adults, expression is seen in optic lamina and weakly in testis.

It catalyses the reaction L-seryl-[protein] + ATP = O-phospho-L-seryl-[protein] + ADP + H(+). The enzyme catalyses L-threonyl-[protein] + ATP = O-phospho-L-threonyl-[protein] + ADP + H(+). With respect to regulation, binding of cGMP results in enzyme activation. The chain is cGMP-dependent protein kinase, isozyme 1 (Pkg21D) from Drosophila melanogaster (Fruit fly).